The following is a 244-amino-acid chain: Phosphoadenosine 5'-phosphosulfate reductase (244 aa).

C239 acts as the Nucleophile; cysteine thiosulfonate intermediate in catalysis.

It belongs to the PAPS reductase family. CysH subfamily.

It is found in the cytoplasm. It carries out the reaction [thioredoxin]-disulfide + sulfite + adenosine 3',5'-bisphosphate + 2 H(+) = [thioredoxin]-dithiol + 3'-phosphoadenylyl sulfate. It participates in sulfur metabolism; hydrogen sulfide biosynthesis; sulfite from sulfate: step 3/3. Functionally, catalyzes the formation of sulfite from phosphoadenosine 5'-phosphosulfate (PAPS) using thioredoxin as an electron donor. This chain is Phosphoadenosine 5'-phosphosulfate reductase, found in Yersinia enterocolitica serotype O:8 / biotype 1B (strain NCTC 13174 / 8081).